The following is a 271-amino-acid chain: Formamidopyrimidine-DNA glycosylase (271 aa).

Residue P2 is the Schiff-base intermediate with DNA of the active site. The active-site Proton donor is the E3. The active-site Proton donor; for beta-elimination activity is the K56. DNA contacts are provided by H89, R107, and K151. The FPG-type zinc finger occupies 236–270 (NVYGRAGLPCRQCGTPVRLLRQGQRSTYFCPHCQR). The active-site Proton donor; for delta-elimination activity is the R260.

The protein belongs to the FPG family. As to quaternary structure, monomer. It depends on Zn(2+) as a cofactor.

It carries out the reaction Hydrolysis of DNA containing ring-opened 7-methylguanine residues, releasing 2,6-diamino-4-hydroxy-5-(N-methyl)formamidopyrimidine.. It catalyses the reaction 2'-deoxyribonucleotide-(2'-deoxyribose 5'-phosphate)-2'-deoxyribonucleotide-DNA = a 3'-end 2'-deoxyribonucleotide-(2,3-dehydro-2,3-deoxyribose 5'-phosphate)-DNA + a 5'-end 5'-phospho-2'-deoxyribonucleoside-DNA + H(+). Functionally, involved in base excision repair of DNA damaged by oxidation or by mutagenic agents. Acts as a DNA glycosylase that recognizes and removes damaged bases. Has a preference for oxidized purines, such as 7,8-dihydro-8-oxoguanine (8-oxoG). Has AP (apurinic/apyrimidinic) lyase activity and introduces nicks in the DNA strand. Cleaves the DNA backbone by beta-delta elimination to generate a single-strand break at the site of the removed base with both 3'- and 5'-phosphates. This chain is Formamidopyrimidine-DNA glycosylase, found in Acidovorax sp. (strain JS42).